Here is a 197-residue protein sequence, read N- to C-terminus: Probable GTP-binding protein EngB (197 aa).

One can recognise an EngB-type G domain in the interval 24–197 (DIPEIALAGR…WDAILEKVNK (174 aa)). Residues 32–39 (GRSNVGKS), 59–63 (GKTQL), 77–80 (DVPG), 144–147 (TKAD), and 176–178 (FSS) contribute to the GTP site. The Mg(2+) site is built by serine 39 and threonine 61.

This sequence belongs to the TRAFAC class TrmE-Era-EngA-EngB-Septin-like GTPase superfamily. EngB GTPase family. Requires Mg(2+) as cofactor.

Necessary for normal cell division and for the maintenance of normal septation. The chain is Probable GTP-binding protein EngB from Streptococcus gordonii (strain Challis / ATCC 35105 / BCRC 15272 / CH1 / DL1 / V288).